The sequence spans 256 residues: MAGHSKFKNIQHRKGAQDKKRAKVFTKLIREIVTAVKAGSTNPDNNPRLRTALATARSQNLPKERIDKAINSANDSANNENYTEIRYEGYAPGGIAIIVEALTDNKNRTAAEVRSSFTKYGGNLGETGSVNFLFKHCGVIQYPLEISSAENILETAIEAGADDIVSDEVLHTIYTDIENFSKVLEFLTDKYGTAEEAYIGWVPLNTIIIDDKEKAEKLLKLVDLLEESDDVQRVFGNYELSDEIYEILQGSEIICK.

The segment at 1-21 (MAGHSKFKNIQHRKGAQDKKR) is disordered.

The protein belongs to the TACO1 family.

Its subcellular location is the cytoplasm. The chain is Probable transcriptional regulatory protein A1I_03240 from Rickettsia bellii (strain OSU 85-389).